The primary structure comprises 190 residues: Holliday junction branch migration complex subunit RuvA (190 aa).

Residues 1–65 form a domain I region; sequence MIGNLRGIVD…ENVTQLYGFI (65 aa). A domain II region spans residues 66 to 143; it reads SKEEQQCLRL…KLEINNNHFH (78 aa). The segment at 144–147 is flexible linker; it reads SISE. The segment at 147–190 is domain III; the sequence is EDALSALINLGYERTKAYDTIKKIEDESPNLDTKDIIRMALKTI.

This sequence belongs to the RuvA family. In terms of assembly, homotetramer. Forms an RuvA(8)-RuvB(12)-Holliday junction (HJ) complex. HJ DNA is sandwiched between 2 RuvA tetramers; dsDNA enters through RuvA and exits via RuvB. An RuvB hexamer assembles on each DNA strand where it exits the tetramer. Each RuvB hexamer is contacted by two RuvA subunits (via domain III) on 2 adjacent RuvB subunits; this complex drives branch migration. In the full resolvosome a probable DNA-RuvA(4)-RuvB(12)-RuvC(2) complex forms which resolves the HJ.

It localises to the cytoplasm. Its function is as follows. The RuvA-RuvB-RuvC complex processes Holliday junction (HJ) DNA during genetic recombination and DNA repair, while the RuvA-RuvB complex plays an important role in the rescue of blocked DNA replication forks via replication fork reversal (RFR). RuvA specifically binds to HJ cruciform DNA, conferring on it an open structure. The RuvB hexamer acts as an ATP-dependent pump, pulling dsDNA into and through the RuvAB complex. HJ branch migration allows RuvC to scan DNA until it finds its consensus sequence, where it cleaves and resolves the cruciform DNA. The polypeptide is Holliday junction branch migration complex subunit RuvA (Wolbachia pipientis subsp. Culex pipiens (strain wPip)).